The primary structure comprises 141 residues: Hemoglobin subunit alpha (141 aa).

Residues 1–141 (VLSPADKTNV…VSTVLTSKYR (141 aa)) form the Globin domain. Serine 3 carries the post-translational modification Phosphoserine. Lysine 7 is modified (N6-succinyllysine). Threonine 8 carries the post-translational modification Phosphothreonine. The residue at position 11 (lysine 11) is an N6-succinyllysine. Residue lysine 16 is modified to N6-acetyllysine; alternate. At lysine 16 the chain carries N6-succinyllysine; alternate. Tyrosine 24 is modified (phosphotyrosine). Lysine 40 carries the post-translational modification N6-succinyllysine. The residue at position 49 (serine 49) is a Phosphoserine. O2 is bound at residue histidine 58. Histidine 87 lines the heme b pocket. Position 102 is a phosphoserine (serine 102). At threonine 108 the chain carries Phosphothreonine. Serine 124 carries the phosphoserine modification. Threonine 134 and threonine 137 each carry phosphothreonine. Serine 138 carries the phosphoserine modification.

It belongs to the globin family. As to quaternary structure, heterotetramer of two alpha chains and two beta chains. Red blood cells.

In terms of biological role, involved in oxygen transport from the lung to the various peripheral tissues. Functionally, hemopressin acts as an antagonist peptide of the cannabinoid receptor CNR1. Hemopressin-binding efficiently blocks cannabinoid receptor CNR1 and subsequent signaling. The protein is Hemoglobin subunit alpha (HBA) of Phoca vitulina (Harbor seal).